We begin with the raw amino-acid sequence, 151 residues long: Extracellular globin-4 (151 aa).

Positions 6-151 (CCSYEDRREI…LVARIAKDLP (146 aa)) constitute a Globin domain. An intrachain disulfide couples Cys7 to Cys138. Residue His101 coordinates heme b.

This sequence belongs to the globin family. In terms of assembly, the extracellular hemoglobin of the earthworm consists of 12 subunits that have a hexagonal bilayer structure with a molecular weight near 3.8 million. Each one-twelfth subunit is composed primarily of disulfide linked trimers (chains A, B, and C) and monomers (chain D).

It localises to the secreted. The protein is Extracellular globin-4 of Lumbricus terrestris (Common earthworm).